Here is a 533-residue protein sequence, read N- to C-terminus: uncharacterized protein (533 aa).

The next 4 helical transmembrane spans lie at Met-1 to Ile-21, Leu-135 to Leu-155, Ala-193 to Ala-213, and Leu-472 to Gly-492.

Its subcellular location is the cell membrane. This is an uncharacterized protein from Mycobacterium bovis (strain ATCC BAA-935 / AF2122/97).